The chain runs to 159 residues: MSFRIGHGYDVHKFTSAKQNIIIGGVEIAYHLGLEAHSDGDVLIHALCDAILGALGLGDIGKHFPDTDNQFKNIDSKFFLAEIKKMLDEKQYSINNIDCTIIAQAPKMLPHIEKMRACLANILEIQISQINIKATTTERLGFIGREEGIATHVVCLLYR.

The a divalent metal cation site is built by aspartate 10 and histidine 12. Residues 10 to 12 (DVH) and 37 to 38 (HS) each bind 4-CDP-2-C-methyl-D-erythritol 2-phosphate. Histidine 45 contributes to the a divalent metal cation binding site. Residues 59–61 (DIG), 64–68 (FPDTD), 103–109 (AQAPKML), 135–138 (TTTE), phenylalanine 142, and arginine 145 each bind 4-CDP-2-C-methyl-D-erythritol 2-phosphate.

This sequence belongs to the IspF family. As to quaternary structure, homotrimer. A divalent metal cation serves as cofactor.

It catalyses the reaction 4-CDP-2-C-methyl-D-erythritol 2-phosphate = 2-C-methyl-D-erythritol 2,4-cyclic diphosphate + CMP. Its pathway is isoprenoid biosynthesis; isopentenyl diphosphate biosynthesis via DXP pathway; isopentenyl diphosphate from 1-deoxy-D-xylulose 5-phosphate: step 4/6. In terms of biological role, involved in the biosynthesis of isopentenyl diphosphate (IPP) and dimethylallyl diphosphate (DMAPP), two major building blocks of isoprenoid compounds. Catalyzes the conversion of 4-diphosphocytidyl-2-C-methyl-D-erythritol 2-phosphate (CDP-ME2P) to 2-C-methyl-D-erythritol 2,4-cyclodiphosphate (ME-CPP) with a corresponding release of cytidine 5-monophosphate (CMP). The protein is 2-C-methyl-D-erythritol 2,4-cyclodiphosphate synthase of Francisella tularensis subsp. novicida (strain U112).